A 1279-amino-acid polypeptide reads, in one-letter code: MSGTKWTDEQRQAIFTKDCNLLVAAGAGAGKTAVLVQRIIEKILDKGEPIDIDKLLVVTFTNAAAAEMRERIGDAISKGLDEDPESKVLRKQLTLLNKSNIMTIHSFCLQVIKNNFHTMEIDPNFRICDETEGILMKQEAIDELFDELYEIENEDFINLVESYASRKDTRLQEVVLELHRFAKSAPFSYDWLLNMAEEFNVGEEFNFEETPWADMIMEDMKVLLHGFKNMLQQSIDVILNSEGIDYYYEPFKMDLSFINSLLEKSSFKEFRGEIIAYDFPKLPLKRNKDADKEAKERVKKLRDKVKKKIVELKNILDSYENEFIKKEFIFLYPSMKALSNLVILFDKKYEAKKRERDLIDFNDIEHLCLSILTDKNSEGHIIPSDIALDYRKKFAEVLIDEYQDSNLVQEVIMSMVSRVKGYWSFYNGQLMFNEEEINLEEPQICLDIPNRFMVGDVKQSIYRFRQAKPEIFLDKYNEYSEEEGTKNRKVKLFKNFRSRKEVINGVNYLFKQIMSKTIGELDYTEEEALKVGASYGEEVKGEPIELCLMDKKYEISEEVLKEYNVDEEEALDNIQLEGRLVAKKIQKLVGNNLEGGLKVFDKKLGEYRNLQYRDIVILMRATSNWAPIFVEELAKEGIPVFADTNSGYFDTAEIKTMISLLQIIDNPLQDIPLLSVLRSPIASFTDDELIDIRMVNKNITFYECMEIIYRLYKNEKLDSYYSFYIEDENKINKIIKDMNEKLKNKICSFIEKLKLWREKSIHIDIDEFIWFLYVETGYYGYAGALQAGEQRQANLRILFQRAKQYAKTSYKGLFNFINFINKLKFSSGDMGSAKILGENENVVRIMSIHKSKGLEFPVVILSGTGKNFNMTDLNKNILFHRDLGYGPDYVDTERRIAYPSLVKNIIKNKIRLETLSEEMRILYVALTRAREKLIITGLINNMDKTVEDWLNLSEDKNKVPEYAVMSGKTYLDWIGPALIKHKDAVSFREELKMTSELSNIVDDKSKWKIELWNKRELLKEKVEEDEVEISEKIKETLMNLEESNYKEEIYKRLSFKYKYDNASSIPTKLSVSDVKKQFILDEKENTEELFKKLELRKPMFMEEKKKISPSERGTIIHLFMQHLDLKKAENEEDIKEQINRLIEREFITYEQSKVINPYKILKFCRGELGKRILNSNNVNKEMPFSIEIPALEIYKELDKEIYKDEKLIIQGVIDCYFEEEDGLVLLDYKTDYVNDIEEIKNRYEIQIKYYEEALNRITGKNVKDKYLYLFSVDNYIKID.

Residues 4 to 499 (TKWTDEQRQA…VKLFKNFRSR (496 aa)) enclose the UvrD-like helicase ATP-binding domain. 25 to 32 (AGAGAGKT) is a binding site for ATP. A UvrD-like helicase C-terminal domain is found at 526–853 (EEALKVGASY…RIMSIHKSKG (328 aa)).

It belongs to the helicase family. AddA subfamily. As to quaternary structure, heterodimer of AddA and AddB/RexB. It depends on Mg(2+) as a cofactor.

It carries out the reaction Couples ATP hydrolysis with the unwinding of duplex DNA by translocating in the 3'-5' direction.. It catalyses the reaction ATP + H2O = ADP + phosphate + H(+). The heterodimer acts as both an ATP-dependent DNA helicase and an ATP-dependent, dual-direction single-stranded exonuclease. Recognizes the chi site generating a DNA molecule suitable for the initiation of homologous recombination. The AddA nuclease domain is required for chi fragment generation; this subunit has the helicase and 3' -&gt; 5' nuclease activities. The chain is ATP-dependent helicase/nuclease subunit A from Clostridium botulinum (strain Hall / ATCC 3502 / NCTC 13319 / Type A).